The following is a 224-amino-acid chain: Dickkopf-related protein 4 (224 aa).

The first 18 residues, 1–18 (MVAAVLLGLSWLCSPLGA), serve as a signal peptide directing secretion. The tract at residues 41 to 90 (CLSDTDCNTRKFCLQPRDEKPFCATCRGLRRRCQRDAMCCPGTLCVNDVC) is DKK-type Cys-1. A disordered region spans residues 109-139 (GTHAEGTTGHPVQENQPKRKPSIKKSQGRKG). Residues 126–136 (KRKPSIKKSQG) show a composition bias toward basic residues. 5 disulfide bridges follow: Cys-145–Cys-157, Cys-151–Cys-166, Cys-156–Cys-194, Cys-176–Cys-202, and Cys-196–Cys-218. Positions 145-218 (CLRTFDCGPG…NRQHARLRVC (74 aa)) are DKK-type Cys-2.

The protein belongs to the dickkopf family. In terms of assembly, interacts with LRP5 and LRP6. Appears to be not glycosylated. In terms of processing, can be proteolytically processed by a furin-like protease. As to expression, expressed in cerebellum, T-cells, esophagus and lung.

The protein localises to the secreted. Its function is as follows. Antagonizes canonical Wnt signaling by inhibiting LRP5/6 interaction with Wnt and by forming a ternary complex with the transmembrane protein KREMEN that promotes internalization of LRP5/6. DKKs play an important role in vertebrate development, where they locally inhibit Wnt regulated processes such as antero-posterior axial patterning, limb development, somitogenesis and eye formation. In the adult, Dkks are implicated in bone formation and bone disease, cancer and Alzheimer disease. The protein is Dickkopf-related protein 4 (DKK4) of Homo sapiens (Human).